We begin with the raw amino-acid sequence, 402 residues long: 1-deoxy-D-xylulose 5-phosphate reductoisomerase (402 aa).

NADPH is bound by residues Thr-25, Gly-26, Ser-27, Val-28, Arg-52, Asn-53, and Asn-136. Residue Lys-137 participates in 1-deoxy-D-xylulose 5-phosphate binding. Glu-138 serves as a coordination point for NADPH. Asp-162 serves as a coordination point for Mn(2+). Ser-163, Glu-164, Ser-188, and His-211 together coordinate 1-deoxy-D-xylulose 5-phosphate. Position 164 (Glu-164) interacts with Mn(2+). NADPH is bound at residue Gly-217. 4 residues coordinate 1-deoxy-D-xylulose 5-phosphate: Ser-224, Asn-229, Lys-230, and Glu-233. Residue Glu-233 participates in Mn(2+) binding.

The protein belongs to the DXR family. Mg(2+) is required as a cofactor. The cofactor is Mn(2+).

It carries out the reaction 2-C-methyl-D-erythritol 4-phosphate + NADP(+) = 1-deoxy-D-xylulose 5-phosphate + NADPH + H(+). It functions in the pathway isoprenoid biosynthesis; isopentenyl diphosphate biosynthesis via DXP pathway; isopentenyl diphosphate from 1-deoxy-D-xylulose 5-phosphate: step 1/6. Catalyzes the NADPH-dependent rearrangement and reduction of 1-deoxy-D-xylulose-5-phosphate (DXP) to 2-C-methyl-D-erythritol 4-phosphate (MEP). In Rhodospirillum centenum (strain ATCC 51521 / SW), this protein is 1-deoxy-D-xylulose 5-phosphate reductoisomerase.